Reading from the N-terminus, the 152-residue chain is Deoxyuridine 5'-triphosphate nucleotidohydrolase (152 aa).

Substrate contacts are provided by residues 72–74 (RSG), Asn85, and 89–91 (TID).

It belongs to the dUTPase family. Mg(2+) serves as cofactor.

It catalyses the reaction dUTP + H2O = dUMP + diphosphate + H(+). The protein operates within pyrimidine metabolism; dUMP biosynthesis; dUMP from dCTP (dUTP route): step 2/2. This enzyme is involved in nucleotide metabolism: it produces dUMP, the immediate precursor of thymidine nucleotides and it decreases the intracellular concentration of dUTP so that uracil cannot be incorporated into DNA. The sequence is that of Deoxyuridine 5'-triphosphate nucleotidohydrolase from Bradyrhizobium sp. (strain ORS 278).